A 364-amino-acid chain; its full sequence is Aminomethyltransferase (364 aa).

This sequence belongs to the GcvT family. The glycine cleavage system is composed of four proteins: P, T, L and H.

It carries out the reaction N(6)-[(R)-S(8)-aminomethyldihydrolipoyl]-L-lysyl-[protein] + (6S)-5,6,7,8-tetrahydrofolate = N(6)-[(R)-dihydrolipoyl]-L-lysyl-[protein] + (6R)-5,10-methylene-5,6,7,8-tetrahydrofolate + NH4(+). The glycine cleavage system catalyzes the degradation of glycine. The protein is Aminomethyltransferase of Shewanella baltica (strain OS195).